We begin with the raw amino-acid sequence, 251 residues long: 1-(5-phosphoribosyl)-5-[(5-phosphoribosylamino)methylideneamino] imidazole-4-carboxamide isomerase (251 aa).

Residue Asp8 is the Proton acceptor of the active site. Residue Asp131 is the Proton donor of the active site.

Belongs to the HisA/HisF family.

The protein resides in the cytoplasm. The enzyme catalyses 1-(5-phospho-beta-D-ribosyl)-5-[(5-phospho-beta-D-ribosylamino)methylideneamino]imidazole-4-carboxamide = 5-[(5-phospho-1-deoxy-D-ribulos-1-ylimino)methylamino]-1-(5-phospho-beta-D-ribosyl)imidazole-4-carboxamide. It participates in amino-acid biosynthesis; L-histidine biosynthesis; L-histidine from 5-phospho-alpha-D-ribose 1-diphosphate: step 4/9. This is 1-(5-phosphoribosyl)-5-[(5-phosphoribosylamino)methylideneamino] imidazole-4-carboxamide isomerase from Burkholderia cenocepacia (strain HI2424).